We begin with the raw amino-acid sequence, 446 residues long: Adenylosuccinate synthetase (446 aa).

Residues 20–26 (GDEGKGK) and 48–50 (GHT) contribute to the GTP site. The active-site Proton acceptor is the Asp-21. Mg(2+)-binding residues include Asp-21 and Gly-48. Residues 21–24 (DEGK), 46–49 (NAGH), Thr-137, Arg-151, Gln-232, Thr-247, and Arg-319 each bind IMP. Catalysis depends on His-49, which acts as the Proton donor. 315 to 321 (SVTGRPR) is a binding site for substrate. Residues Arg-321, 347–349 (KLD), and 429–431 (STG) each bind GTP.

Belongs to the adenylosuccinate synthetase family. As to quaternary structure, homodimer. It depends on Mg(2+) as a cofactor.

Its subcellular location is the cytoplasm. The enzyme catalyses IMP + L-aspartate + GTP = N(6)-(1,2-dicarboxyethyl)-AMP + GDP + phosphate + 2 H(+). Its pathway is purine metabolism; AMP biosynthesis via de novo pathway; AMP from IMP: step 1/2. Its function is as follows. Plays an important role in the de novo pathway of purine nucleotide biosynthesis. Catalyzes the first committed step in the biosynthesis of AMP from IMP. This chain is Adenylosuccinate synthetase, found in Polynucleobacter necessarius subsp. necessarius (strain STIR1).